The chain runs to 336 residues: Palmitoyltransferase PFA3 (336 aa).

Over methionine 1–serine 6 the chain is Cytoplasmic. Residues leucine 7–threonine 29 form a helical membrane-spanning segment. Topologically, residues arginine 30 to tryptophan 37 are vacuolar. Residues phenylalanine 38–isoleucine 58 traverse the membrane as a helical segment. At alanine 59–lysine 147 the chain is on the cytoplasmic side. The region spanning arginine 104–methionine 154 is the DHHC domain. The helical transmembrane segment at phenylalanine 148 to cysteine 168 threads the bilayer. Over tyrosine 169–histidine 188 the chain is Vacuolar. A helical transmembrane segment spans residues leucine 189–phenylalanine 209. The Cytoplasmic portion of the chain corresponds to serine 210–asparagine 336.

This sequence belongs to the DHHC palmitoyltransferase family. PFA3 subfamily. In terms of processing, autopalmitoylated.

Its subcellular location is the vacuole membrane. The enzyme catalyses L-cysteinyl-[protein] + hexadecanoyl-CoA = S-hexadecanoyl-L-cysteinyl-[protein] + CoA. In terms of biological role, palmitoyltransferase specific for VAC8. Palmitoylates VAC8 at one or more of its N-terminal cysteine residues, which is required for its proper membrane localization. This is Palmitoyltransferase PFA3 (PFA3) from Saccharomyces cerevisiae (strain ATCC 204508 / S288c) (Baker's yeast).